We begin with the raw amino-acid sequence, 56 residues long: Large ribosomal subunit protein bL32 (56 aa).

A disordered region spans residues 1–26 (MAVQQNKKSRSKRGMRRSHDALSTAQ). Basic residues predominate over residues 7–16 (KKSRSKRGMR).

Belongs to the bacterial ribosomal protein bL32 family.

This Shewanella amazonensis (strain ATCC BAA-1098 / SB2B) protein is Large ribosomal subunit protein bL32.